The sequence spans 122 residues: NADH-quinone oxidoreductase subunit A (122 aa).

3 consecutive transmembrane segments (helical) span residues 12–32 (ILLF…AGWL), 67–87 (IAIL…WAVV), and 91–111 (IGWF…VGFI).

The protein belongs to the complex I subunit 3 family. In terms of assembly, NDH-1 is composed of 14 different subunits. Subunits NuoA, H, J, K, L, M, N constitute the membrane sector of the complex.

The protein localises to the cell inner membrane. It catalyses the reaction a quinone + NADH + 5 H(+)(in) = a quinol + NAD(+) + 4 H(+)(out). Its function is as follows. NDH-1 shuttles electrons from NADH, via FMN and iron-sulfur (Fe-S) centers, to quinones in the respiratory chain. The immediate electron acceptor for the enzyme in this species is believed to be ubiquinone. Couples the redox reaction to proton translocation (for every two electrons transferred, four hydrogen ions are translocated across the cytoplasmic membrane), and thus conserves the redox energy in a proton gradient. This is NADH-quinone oxidoreductase subunit A from Nitrosomonas europaea (strain ATCC 19718 / CIP 103999 / KCTC 2705 / NBRC 14298).